The following is a 158-amino-acid chain: Transcriptional regulator MraZ (158 aa).

SpoVT-AbrB domains are found at residues 7–66 and 95–138; these read KEQH…EPSV and LDCV…APEK.

The protein belongs to the MraZ family. As to quaternary structure, forms oligomers.

The protein localises to the cytoplasm. It is found in the nucleoid. The sequence is that of Transcriptional regulator MraZ from Prosthecochloris aestuarii (strain DSM 271 / SK 413).